We begin with the raw amino-acid sequence, 234 residues long: Orotate phosphoribosyltransferase (234 aa).

K30 is a binding site for 5-phospho-alpha-D-ribose 1-diphosphate. Orotate is bound at residue 38–39 (FF). 5-phospho-alpha-D-ribose 1-diphosphate contacts are provided by residues 80-81 (YK), R110, K111, K114, H116, and 136-144 (DDVITAGTA). Orotate contacts are provided by T140 and R168.

This sequence belongs to the purine/pyrimidine phosphoribosyltransferase family. PyrE subfamily. Homodimer.

It carries out the reaction orotidine 5'-phosphate + diphosphate = orotate + 5-phospho-alpha-D-ribose 1-diphosphate. It functions in the pathway pyrimidine metabolism; UMP biosynthesis via de novo pathway; UMP from orotate: step 1/2. Catalyzes the transfer of a ribosyl phosphate group from 5-phosphoribose 1-diphosphate to orotate, leading to the formation of orotidine monophosphate (OMP). This Metarhizium anisopliae (Entomophthora anisopliae) protein is Orotate phosphoribosyltransferase (URA5).